Reading from the N-terminus, the 302-residue chain is Polyamine aminopropyltransferase (302 aa).

The 236-residue stretch at 4–239 folds into the PABS domain; the sequence is WTWHLEWQTP…GLWGFIYASD (236 aa). Glutamine 33 contributes to the S-methyl-5'-thioadenosine binding site. Residues histidine 64 and glutamate 88 each contribute to the spermidine site. S-methyl-5'-thioadenosine contacts are provided by residues aspartate 108 and 140-141; that span reads DG. Aspartate 158 (proton acceptor) is an active-site residue. Proline 167 provides a ligand contact to S-methyl-5'-thioadenosine.

This sequence belongs to the spermidine/spermine synthase family. In terms of assembly, homodimer or homotetramer.

The protein resides in the cytoplasm. The catalysed reaction is S-adenosyl 3-(methylsulfanyl)propylamine + putrescine = S-methyl-5'-thioadenosine + spermidine + H(+). Its pathway is amine and polyamine biosynthesis; spermidine biosynthesis; spermidine from putrescine: step 1/1. Functionally, catalyzes the irreversible transfer of a propylamine group from the amino donor S-adenosylmethioninamine (decarboxy-AdoMet) to putrescine (1,4-diaminobutane) to yield spermidine. This Sulfolobus acidocaldarius (strain ATCC 33909 / DSM 639 / JCM 8929 / NBRC 15157 / NCIMB 11770) protein is Polyamine aminopropyltransferase.